Here is a 495-residue protein sequence, read N- to C-terminus: RuBisCO large subunit-binding protein subunit alpha (495 aa).

Belongs to the chaperonin (HSP60) family. As to quaternary structure, oligomer of probably six alpha and six beta subunits.

It localises to the plastid. It is found in the chloroplast. This protein binds RuBisCO small and large subunits and is implicated in the assembly of the enzyme oligomer. This is RuBisCO large subunit-binding protein subunit alpha from Ricinus communis (Castor bean).